The sequence spans 100 residues: Urease subunit gamma (100 aa).

This sequence belongs to the urease gamma subunit family. Heterotrimer of UreA (gamma), UreB (beta) and UreC (alpha) subunits. Three heterotrimers associate to form the active enzyme.

It is found in the cytoplasm. It carries out the reaction urea + 2 H2O + H(+) = hydrogencarbonate + 2 NH4(+). Its pathway is nitrogen metabolism; urea degradation; CO(2) and NH(3) from urea (urease route): step 1/1. This Herpetosiphon aurantiacus (strain ATCC 23779 / DSM 785 / 114-95) protein is Urease subunit gamma.